The primary structure comprises 388 residues: Na(+)/H(+) antiporter NhaA (388 aa).

Helical transmembrane passes span 13 to 33, 36 to 56, 59 to 79, 95 to 115, 125 to 145, 154 to 174, 179 to 199, 213 to 233, 259 to 279, 287 to 307, 328 to 348, and 363 to 383; these read AAGG…ANTP, GIYH…LEIA, LLLW…GLEV, VFPA…YLMF, GWAI…ALLG, VFLL…IALF, VSMA…FMNW, LVLW…GVII, VAFL…LQGV, LLPV…IFTF, VFAV…IASL, and LGIL…LRMS.

This sequence belongs to the NhaA Na(+)/H(+) (TC 2.A.33) antiporter family.

Its subcellular location is the cell inner membrane. It carries out the reaction Na(+)(in) + 2 H(+)(out) = Na(+)(out) + 2 H(+)(in). Its function is as follows. Na(+)/H(+) antiporter that extrudes sodium in exchange for external protons. In Serratia proteamaculans (strain 568), this protein is Na(+)/H(+) antiporter NhaA.